Consider the following 1506-residue polypeptide: Transcriptional repressor NF-X1 homolog (1506 aa).

Residues 1–12 (MEESQNIPPKTQ) show a composition bias toward polar residues. Disordered regions lie at residues 1-123 (MEES…NNQL), 142-164 (LKSE…QEPT), and 181-282 (KAFV…KKDI). 2 stretches are compositionally biased toward low complexity: residues 13 to 103 (TLNN…SNSN) and 110 to 121 (HNNNYNNNNNNN). The segment covering 194–209 (NNTNNNNNNNNNNNNN) has biased composition (low complexity). A compositionally biased stretch (basic and acidic residues) spans 217–232 (DNNRPQRERRERKPKE). The span at 240–252 (PQQPQQPQQPQPQ) shows a compositional bias: pro residues. Residues 253-263 (PQQQQQSQQQQ) show a composition bias toward low complexity. Residues 267–282 (ENNRKKENKLQSKKDI) are compositionally biased toward basic and acidic residues. The segment at 363–416 (IYECMVCFENVGKNAVIWSCSQCFTMFHSSCIKQWSSKSVTTEGKWKCPGCRYN) adopts a PHD-type zinc-finger fold. Residues 366–414 (CMVCFENVGKNAVIWSCSQCFTMFHSSCIKQWSSKSVTTEGKWKCPGCR) form an RING-type; degenerate zinc finger. 7 NF-X1-type zinc fingers span residues 460-478 (CPHS…NCSS), 515-534 (CGNH…PCEV), 581-600 (CGNH…PCSL), 642-661 (CKQH…SCKV), 739-758 (CGVH…NCYI), 796-817 (CGHS…PCTY), and 852-868 (CLSH…PCLI). Disordered regions lie at residues 897-1012 (QQSK…VDLN) and 1021-1040 (NEEE…DEDE). The segment covering 903 to 921 (TTTTTTTTTTSTTSTTSPK) has biased composition (low complexity). Acidic residues predominate over residues 925–934 (KDEELIEDDN). Residues 935–980 (NNNNNNNNNNNNNNNNNNNNNNNNNNNNNNNNNNNNNNNNNNNNNN) show a composition bias toward low complexity. Composition is skewed to basic and acidic residues over residues 981 to 1002 (EKAE…HSDD) and 1021 to 1031 (NEEEERIKKEE). The NF-X1-type 8 zinc-finger motif lies at 1062 to 1084 (CEHTCHQACHPGEPCPTNISCKQ). Disordered regions lie at residues 1132 to 1167 (SHTL…SSPT) and 1447 to 1473 (NQNQ…IKPT). Composition is skewed to low complexity over residues 1137-1167 (NNPN…SSPT) and 1447-1470 (NQNQ…NINI).

The protein belongs to the NFX1 family.

The protein localises to the nucleus. Functionally, may play a role in transcription regulation. The polypeptide is Transcriptional repressor NF-X1 homolog (nfx1) (Dictyostelium discoideum (Social amoeba)).